Reading from the N-terminus, the 254-residue chain is Large ribosomal subunit protein uL4 (254 aa).

The tract at residues 45 to 70 (PWGNDPEAGKRTSAKGWGSGRGTARV) is disordered.

The protein belongs to the universal ribosomal protein uL4 family. Part of the 50S ribosomal subunit.

One of the primary rRNA binding proteins, this protein initially binds near the 5'-end of the 23S rRNA. It is important during the early stages of 50S assembly. It makes multiple contacts with different domains of the 23S rRNA in the assembled 50S subunit and ribosome. Its function is as follows. Forms part of the polypeptide exit tunnel. The chain is Large ribosomal subunit protein uL4 from Methanobrevibacter smithii (strain ATCC 35061 / DSM 861 / OCM 144 / PS).